The following is a 371-amino-acid chain: tRNA-specific 2-thiouridylase MnmA (371 aa).

ATP-binding positions include 13–20 and Met39; that span reads GMSGGVDS. The tract at residues 99–101 is interaction with target base in tRNA; it reads NPD. The Nucleophile role is filled by Cys104. Cys104 and Cys200 are disulfide-bonded. Gly128 is a binding site for ATP. The interval 150-152 is interaction with tRNA; that stretch reads KDQ. Cys200 serves as the catalytic Cysteine persulfide intermediate. An interaction with tRNA region spans residues 308–309; it reads RY.

This sequence belongs to the MnmA/TRMU family.

The protein localises to the cytoplasm. The enzyme catalyses S-sulfanyl-L-cysteinyl-[protein] + uridine(34) in tRNA + AH2 + ATP = 2-thiouridine(34) in tRNA + L-cysteinyl-[protein] + A + AMP + diphosphate + H(+). Functionally, catalyzes the 2-thiolation of uridine at the wobble position (U34) of tRNA, leading to the formation of s(2)U34. This chain is tRNA-specific 2-thiouridylase MnmA, found in Bacillus cytotoxicus (strain DSM 22905 / CIP 110041 / 391-98 / NVH 391-98).